A 273-amino-acid chain; its full sequence is MADAPSGPSVLSHYPGAGLAGEQQREEERHKGCHHHQLNGLISPDLRHLKAVSSLKNKLLEQKTRKDSGLVQPQGRTDTRAPNGLERLQGEEEKLSACLASCSLRGDGEALGNHVSQGENDDTIRYVRYESELQMADIMRLITRDLSEPYSIYTYRYFIHNWPQLCFLAMVGEECVGAIVCKLDMHKKMFRRGYIAMLAVDSKYRRKGIGTHLVKKAIYAMVEGDCDEVVLETEITNKSALKLYENLGFVRDKRLFRYYLNGVDALRLKLWLR.

Disordered regions lie at residues 1–39 and 62–85; these read MADA…HQLN and QKTR…PNGL. Positions 125 to 273 constitute an N-acetyltransferase domain; that stretch reads RYVRYESELQ…DALRLKLWLR (149 aa).

Belongs to the acetyltransferase family. MAK3 subfamily. As to quaternary structure, component of the N-terminal acetyltransferase C (NatC) complex.

It is found in the cytoplasm. The protein localises to the nucleus. The enzyme catalyses N-terminal L-methionyl-L-leucyl-[protein] + acetyl-CoA = N-terminal N(alpha)-acetyl-L-methionyl-L-leucyl-[protein] + CoA + H(+). It carries out the reaction N-terminal L-methionyl-L-isoleucyl-[protein] + acetyl-CoA = N-terminal N(alpha)-acetyl-L-methionyl-L-isoleucyl-[protein] + CoA + H(+). It catalyses the reaction N-terminal L-methionyl-L-phenylalanyl-[protein] + acetyl-CoA = N-terminal N(alpha)-acetyl-L-methionyl-L-phenylalanyl-[protein] + CoA + H(+). The catalysed reaction is N-terminal L-methionyl-L-tryptophyl-[protein] + acetyl-CoA = N-terminal N(alpha)-acetyl-L-methionyl-L-tryptophyl-[protein] + CoA + H(+). The enzyme catalyses N-terminal L-methionyl-L-tyrosyl-[protein] + acetyl-CoA = N-terminal N(alpha)-acetyl-L-methionyl-L-tyrosyl-[protein] + CoA + H(+). Its function is as follows. Catalytic subunit of the N-terminal acetyltransferase C (NatC) complex. Catalyzes acetylation of the N-terminal methionine residues of peptides beginning with Met-Leu-Ala and Met-Leu-Gly. N-terminal acetylation protects proteins from ubiquitination and degradation by the N-end rule pathway. This Xenopus laevis (African clawed frog) protein is N-alpha-acetyltransferase 30 (naa30).